A 268-amino-acid chain; its full sequence is Mitochondrial distribution and morphology protein 12 (268 aa).

One can recognise an SMP-LTD domain in the interval 1 to 266; the sequence is MSIDLEWCKL…FPNFHTIVMA (266 aa). Positions 66 to 136 are disordered; sequence EDDEEGSDRG…PPPAENPHPN (71 aa). Over residues 102–111 the composition is skewed to polar residues; sequence PATNVTSSLD. A compositionally biased stretch (basic and acidic residues) spans 112 to 121; sequence TRSDQPDDQK.

This sequence belongs to the MDM12 family. As to quaternary structure, component of the ER-mitochondria encounter structure (ERMES) or MDM complex, composed of MMM1, MDM10, MDM12 and MDM34. An MMM1 homodimer associates with one molecule of MDM12 on each side in a pairwise head-to-tail manner, and the SMP-LTD domains of MMM1 and MDM12 generate a continuous hydrophobic tunnel for phospholipid trafficking.

The protein localises to the mitochondrion outer membrane. It localises to the endoplasmic reticulum membrane. Functionally, component of the ERMES/MDM complex, which serves as a molecular tether to connect the endoplasmic reticulum (ER) and mitochondria. Components of this complex are involved in the control of mitochondrial shape and protein biogenesis, and function in nonvesicular lipid trafficking between the ER and mitochondria. MDM12 is required for the interaction of the ER-resident membrane protein MMM1 and the outer mitochondrial membrane-resident beta-barrel protein MDM10. The MDM12-MMM1 subcomplex functions in the major beta-barrel assembly pathway that is responsible for biogenesis of all mitochondrial outer membrane beta-barrel proteins, and acts in a late step after the SAM complex. The MDM10-MDM12-MMM1 subcomplex further acts in the TOM40-specific pathway after the action of the MDM12-MMM1 complex. Essential for establishing and maintaining the structure of mitochondria and maintenance of mtDNA nucleoids. This is Mitochondrial distribution and morphology protein 12 from Laccaria bicolor (strain S238N-H82 / ATCC MYA-4686) (Bicoloured deceiver).